Reading from the N-terminus, the 466-residue chain is Soluble pyridine nucleotide transhydrogenase (466 aa).

Residue 36 to 45 (EKESSVGGGC) coordinates FAD.

Belongs to the class-I pyridine nucleotide-disulfide oxidoreductase family. Requires FAD as cofactor.

The protein localises to the cytoplasm. It carries out the reaction NAD(+) + NADPH = NADH + NADP(+). Conversion of NADPH, generated by peripheral catabolic pathways, to NADH, which can enter the respiratory chain for energy generation. In Vibrio vulnificus (strain CMCP6), this protein is Soluble pyridine nucleotide transhydrogenase.